The sequence spans 618 residues: uncharacterized protein (618 aa).

The zn(2)-C6 fungal-type DNA-binding region spans 18-47 (SCQRCRQRKIKCDRLHPCFQCVKSNSQCFY). Phosphoserine is present on serine 598.

Its subcellular location is the nucleus. This is an uncharacterized protein from Schizosaccharomyces pombe (strain 972 / ATCC 24843) (Fission yeast).